A 367-amino-acid chain; its full sequence is uncharacterized protein (367 aa).

Transmembrane regions (helical) follow at residues 35–55 (YVYD…IILW), 61–81 (LALF…TLLV), 92–112 (EVAD…TAAG), and 113–133 (LMFS…PLFL). Disordered regions lie at residues 177–220 (KLPK…PASI), 249–283 (SNIK…YYTP), and 296–367 (GDIS…SRPK). Over residues 257–274 (NTKSILHTPLNRRSPSGS) the composition is skewed to polar residues. A compositionally biased stretch (low complexity) spans 302–312 (SSSSTSSKTST). A compositionally biased stretch (basic and acidic residues) spans 323-342 (SRSERNARHHRNKEDHRQNQ). The span at 357 to 367 (PRRKKYRSRPK) shows a compositional bias: basic residues.

The protein belongs to the chlamydial CPn_0443/CT_005/TC_0273 family.

It is found in the cell membrane. This is an uncharacterized protein from Chlamydia muridarum (strain MoPn / Nigg).